Consider the following 413-residue polypeptide: Chloramphenicol efflux pump Rv0191 (413 aa).

A run of 12 helical transmembrane segments spans residues Leu-23–Ala-43, Val-55–Pro-75, Leu-89–Phe-109, Ala-110–Ile-130, Ile-150–Leu-170, Leu-176–Leu-196, Val-226–Ile-246, Asn-256–Ala-276, Ala-286–Phe-306, Ala-312–Val-332, Gly-353–Leu-373, and Leu-378–Val-398.

This sequence belongs to the major facilitator superfamily.

The protein localises to the cell membrane. Inhibited by the drug efflux pump inhibitors verapamil, resperine, piperine, chlorpromazine and carbonyl cyanide m-chlorophenylhydrazone (CCCP). Active efflux pump that plays an important role in chloramphenicol resistance. Overexpression causes pyrazinamide resistance. The protein is Chloramphenicol efflux pump Rv0191 of Mycobacterium tuberculosis (strain ATCC 25618 / H37Rv).